Consider the following 317-residue polypeptide: 1-phosphatidylinositol phosphodiesterase (317 aa).

Positions methionine 1 to threonine 22 are cleaved as a signal peptide. Residues leucine 58–leucine 196 form the PI-PLC X-box domain. Histidine 67 serves as the catalytic Proton acceptor. Catalysis depends on histidine 115, which acts as the Proton donor.

In terms of assembly, monomer.

The protein resides in the secreted. It localises to the cytoplasm. It carries out the reaction a 1,2-diacyl-sn-glycero-3-phospho-(1D-myo-inositol) = 1D-myo-inositol 1,2-cyclic phosphate + a 1,2-diacyl-sn-glycerol. Cleaves glycosylphosphatidylinositol (GPI) and phosphatidylinositol (PI) anchors but not PI phosphates. Important factor in pathogenesis, PI-PLC activity is present only in virulent listeria species. It may participate in the lysis of the phagolysosomal membrane. The polypeptide is 1-phosphatidylinositol phosphodiesterase (plcA) (Listeria monocytogenes serovar 1/2a (strain ATCC BAA-679 / EGD-e)).